The chain runs to 215 residues: Large ribosomal subunit protein bL25 (215 aa).

Residues 192–203 (EEATEEEEEAAE) are compositionally biased toward acidic residues. A disordered region spans residues 192–215 (EEATEEEEEAAEPEVIKRKEEEEE). The segment covering 205–215 (EVIKRKEEEEE) has biased composition (basic and acidic residues).

Belongs to the bacterial ribosomal protein bL25 family. CTC subfamily. Part of the 50S ribosomal subunit; part of the 5S rRNA/L5/L18/L25 subcomplex. Contacts the 5S rRNA. Binds to the 5S rRNA independently of L5 and L18.

Functionally, this is one of the proteins that binds to the 5S RNA in the ribosome where it forms part of the central protuberance. The sequence is that of Large ribosomal subunit protein bL25 from Thermotoga maritima (strain ATCC 43589 / DSM 3109 / JCM 10099 / NBRC 100826 / MSB8).